A 365-amino-acid chain; its full sequence is Succinyl-diaminopimelate desuccinylase (365 aa).

Zn(2+) is bound at residue His65. Asp67 is an active-site residue. Residue Asp96 coordinates Zn(2+). The Proton acceptor role is filled by Glu126. Positions 127, 155, and 340 each coordinate Zn(2+).

This sequence belongs to the peptidase M20A family. DapE subfamily. In terms of assembly, homodimer. The cofactor is Zn(2+). Co(2+) serves as cofactor.

It carries out the reaction N-succinyl-(2S,6S)-2,6-diaminopimelate + H2O = (2S,6S)-2,6-diaminopimelate + succinate. It participates in amino-acid biosynthesis; L-lysine biosynthesis via DAP pathway; LL-2,6-diaminopimelate from (S)-tetrahydrodipicolinate (succinylase route): step 3/3. Its function is as follows. Catalyzes the hydrolysis of N-succinyl-L,L-diaminopimelic acid (SDAP), forming succinate and LL-2,6-diaminopimelate (DAP), an intermediate involved in the bacterial biosynthesis of lysine and meso-diaminopimelic acid, an essential component of bacterial cell walls. This chain is Succinyl-diaminopimelate desuccinylase, found in Campylobacter jejuni subsp. jejuni serotype O:23/36 (strain 81-176).